An 834-amino-acid polypeptide reads, in one-letter code: Phenylalanine--tRNA ligase beta subunit (834 aa).

A tRNA-binding domain is found at Gly48–Asn159. The region spanning Pro411–Ser492 is the B5 domain. Asp470, Asp476, Glu479, and Glu480 together coordinate Mg(2+). The 94-residue stretch at Ser740–Arg833 folds into the FDX-ACB domain.

Belongs to the phenylalanyl-tRNA synthetase beta subunit family. Type 1 subfamily. As to quaternary structure, tetramer of two alpha and two beta subunits. It depends on Mg(2+) as a cofactor.

It localises to the cytoplasm. It carries out the reaction tRNA(Phe) + L-phenylalanine + ATP = L-phenylalanyl-tRNA(Phe) + AMP + diphosphate + H(+). This chain is Phenylalanine--tRNA ligase beta subunit, found in Nocardia farcinica (strain IFM 10152).